The sequence spans 79 residues: Sulfur carrier protein TusA (79 aa).

Residue Cys17 is the Cysteine persulfide intermediate of the active site.

It belongs to the sulfur carrier protein TusA family.

The protein localises to the cytoplasm. Its function is as follows. Sulfur carrier protein which probably makes part of a sulfur-relay system. This Mannheimia succiniciproducens (strain KCTC 0769BP / MBEL55E) protein is Sulfur carrier protein TusA.